Here is a 469-residue protein sequence, read N- to C-terminus: 3-isopropylmalate dehydratase large subunit (469 aa).

Positions 349, 409, and 412 each coordinate [4Fe-4S] cluster.

The protein belongs to the aconitase/IPM isomerase family. LeuC type 1 subfamily. In terms of assembly, heterodimer of LeuC and LeuD. [4Fe-4S] cluster is required as a cofactor.

It catalyses the reaction (2R,3S)-3-isopropylmalate = (2S)-2-isopropylmalate. Its pathway is amino-acid biosynthesis; L-leucine biosynthesis; L-leucine from 3-methyl-2-oxobutanoate: step 2/4. Catalyzes the isomerization between 2-isopropylmalate and 3-isopropylmalate, via the formation of 2-isopropylmaleate. This chain is 3-isopropylmalate dehydratase large subunit, found in Methylorubrum populi (strain ATCC BAA-705 / NCIMB 13946 / BJ001) (Methylobacterium populi).